The chain runs to 69 residues: Putative membrane protein insertion efficiency factor (69 aa).

This sequence belongs to the UPF0161 family.

Its subcellular location is the cell membrane. Could be involved in insertion of integral membrane proteins into the membrane. The chain is Putative membrane protein insertion efficiency factor from Thermoanaerobacter pseudethanolicus (strain ATCC 33223 / 39E) (Clostridium thermohydrosulfuricum).